Consider the following 344-residue polypeptide: Heat-inducible transcription repressor HrcA (344 aa).

It belongs to the HrcA family.

Functionally, negative regulator of class I heat shock genes (grpE-dnaK-dnaJ and groELS operons). Prevents heat-shock induction of these operons. The polypeptide is Heat-inducible transcription repressor HrcA (Streptococcus pyogenes serotype M6 (strain ATCC BAA-946 / MGAS10394)).